The primary structure comprises 265 residues: ETS-related transcription factor Elf-5 (265 aa).

The PNT domain occupies 43-129 (YPAFEHQTAC…FILQNIRTQG (87 aa)). Positions 173-254 (SHLWEFVRDL…VDRRLVYKFG (82 aa)) form a DNA-binding region, ETS.

The protein belongs to the ETS family. As to expression, expressed exclusively in tissues with a high content of epithelial cells. Highly expressed in salivary gland, mammary gland, kidney and prostate. Weakly expressed in placenta and lung. Isoform 1 and isoform 2 are differentially expressed in different tissues. In the kidney, only isoform 1 was expressed, while prostate expressed both isoforms, with levels of isoform 2 being higher. Expression is up-regulated during keratinocyte differentiation. Several epithelial carcinoma cell lines showed lack of expression.

The protein localises to the nucleus. In terms of biological role, transcriptionally activator that may play a role in regulating the later stages of keratinocytes terminal differentiation. Its function is as follows. Isoform 2 binds to DNA sequences containing the consensus nucleotide core sequence GGA[AT]. Transcriptionally activates SPRR2A and the parotid gland-specific PSP promoters. This is ETS-related transcription factor Elf-5 (ELF5) from Homo sapiens (Human).